A 296-amino-acid chain; its full sequence is tRNA (guanine(9)-N1)-methyltransferase (296 aa).

Residues 1–33 (MTPETNNDETLSRPKPRAALPPVPEGMSKSQWK) form a disordered region. One can recognise an SAM-dependent MTase TRM10-type domain in the interval 85-274 (TPRVNVNQKD…SVLPARKLAE (190 aa)). S-adenosyl-L-methionine-binding positions include 181–182 (LT), glycine 201, 205–209 (DKNRH), cysteine 213, leucine 227, and 239–241 (KVL). The active-site Proton acceptor is aspartate 205. Residues 277 to 296 (DHAQESNSSSPAEEQDAQDI) are disordered.

It belongs to the class IV-like SAM-binding methyltransferase superfamily. TRM10 family. As to quaternary structure, monomer.

It localises to the cytoplasm. It is found in the nucleus. The catalysed reaction is guanosine(9) in tRNA + S-adenosyl-L-methionine = N(1)-methylguanosine(9) in tRNA + S-adenosyl-L-homocysteine + H(+). S-adenosyl-L-methionine-dependent guanine N(1)-methyltransferase that catalyzes the formation of N(1)-methylguanine at position 9 (m1G9) in cytoplasmic tRNA. The chain is tRNA (guanine(9)-N1)-methyltransferase from Eremothecium gossypii (strain ATCC 10895 / CBS 109.51 / FGSC 9923 / NRRL Y-1056) (Yeast).